We begin with the raw amino-acid sequence, 278 residues long: HAUS augmin-like complex subunit 1 (278 aa).

Coiled-coil stretches lie at residues 49–79, 124–177, and 249–277; these read RDVY…LMES, SDLF…KVDN, and SLAQ…DMME.

The protein belongs to the HAUS1 family. In terms of assembly, component of the HAUS augmin-like complex. The complex interacts with the gamma-tubulin ring complex and this interaction is required for spindle assembly. Associates with microtubules. The interaction with microtubules is strong during mitosis, while it is weak or absent during interphase. It is unclear whether this interaction is direct or indirect. Interacts with EML3 (phosphorylated at 'Thr-881'). In terms of tissue distribution, widely expressed. Expressed in pancreas, kidney, skeletal muscle, liver and heart. Weakly expressed in lung, brain and placenta.

It is found in the cytoplasm. It localises to the cytoskeleton. The protein localises to the microtubule organizing center. The protein resides in the centrosome. Its subcellular location is the spindle. It is found in the spindle pole. Contributes to mitotic spindle assembly, maintenance of centrosome integrity and completion of cytokinesis as part of the HAUS augmin-like complex. This Homo sapiens (Human) protein is HAUS augmin-like complex subunit 1 (HAUS1).